The sequence spans 93 residues: Transcription factor RADIALIS (93 aa).

The 56-residue stretch at 6 to 61 (GSGRPWSAKENKAFERALAVYDKDTPDRWANVARAVEGRTPEEVKKHYEILVEDIK) folds into the SANT domain.

In terms of tissue distribution, specifically expressed in the dorsal region of developing flowers.

Its subcellular location is the nucleus. Functionally, involved in the dorsovental asymmetry of flowers. Promotes dorsal identity. The polypeptide is Transcription factor RADIALIS (RAD) (Antirrhinum majus (Garden snapdragon)).